The sequence spans 120 residues: MQLYLKDGMEIREVQFTNEEVQNYCELLNIKYDHYVPTLMCAKLWPQFELFQSFSKKPIILKETHIKTQQQLQVDCTYEATLHKVSQKLIKNIIKYTYGLEINKDKKHCMYIKQIFIEVR.

This is Protein VraC from Staphylococcus epidermidis (strain ATCC 35984 / DSM 28319 / BCRC 17069 / CCUG 31568 / BM 3577 / RP62A).